Here is an 83-residue protein sequence, read N- to C-terminus: Large ribosomal subunit protein bL31B (83 aa).

Belongs to the bacterial ribosomal protein bL31 family. Type B subfamily. As to quaternary structure, part of the 50S ribosomal subunit.

The sequence is that of Large ribosomal subunit protein bL31B from Lactobacillus johnsonii (strain CNCM I-12250 / La1 / NCC 533).